A 1704-amino-acid polypeptide reads, in one-letter code: Type-2 histone deacetylase 2 (1704 aa).

3 disordered regions span residues 1–303 (MSTN…SEER), 315–383 (TQGS…TSKK), and 540–634 (QFLQ…IGNS). A compositionally biased stretch (low complexity) spans 15 to 69 (TTITNESNTDNNNNNNDDNKNNTENTTSPTNNNNTNDNDNNSDNNNNKNNNNNNS). Residues 70 to 81 (QVTEEQQVTLED) show a composition bias toward polar residues. A compositionally biased stretch (acidic residues) spans 97–113 (DSAEEDEDEMEDDDEDA). Residues 134 to 153 (KVQQSTNTHLSQTTPESPTI) are compositionally biased toward polar residues. Low complexity predominate over residues 165 to 176 (STSTNNTPNTQS). The segment covering 186-195 (LTSDEEKDLM) has biased composition (basic and acidic residues). Positions 196–210 (LSEESDGGVGEDDDS) are enriched in acidic residues. Low complexity predominate over residues 222–286 (NQSNQNQNNN…SNNDNNNNNN (65 aa)). Polar residues predominate over residues 315–325 (TQGSSTTTSDP). Residues 326–351 (NNQNNQINQINQNNQNNQNNQNNQNN) show a composition bias toward low complexity. The span at 354–369 (GEEEFGEEFEEEEEDM) shows a compositional bias: acidic residues. Positions 372-382 (PKKKTKYKTSK) are enriched in basic residues. 2 stretches are compositionally biased toward low complexity: residues 540–549 (QFLQQQQQQQ) and 561–580 (NSNN…NNNS). Over residues 608–620 (YETRKYTKKRNDE) the composition is skewed to basic and acidic residues. Residues aspartate 1165 and glycine 1227 each coordinate substrate. A divalent metal cation contacts are provided by aspartate 1256, histidine 1258, and aspartate 1350. The segment at 1485-1704 (QLERQKQLQQ…TPQNINNSDN (220 aa)) is disordered. Residues 1491 to 1616 (QLQQQQQQAQ…NNSNNNNNMN (126 aa)) show a composition bias toward low complexity. Over residues 1649–1669 (LSPNSVNRGNNPSNISMSGAQ) the composition is skewed to polar residues. Over residues 1677-1698 (SPKPSNSPNSPSTSNNNGTPQN) the composition is skewed to low complexity.

This sequence belongs to the histone deacetylase family. HD type 2 subfamily.

The protein localises to the nucleus. The protein resides in the cytoplasm. It catalyses the reaction N(6)-acetyl-L-lysyl-[histone] + H2O = L-lysyl-[histone] + acetate. Its function is as follows. Responsible for the deacetylation of lysine residues on the N-terminal part of the core histones (H2A, H2B, H3 and H4). Histone deacetylation plays an important role in transcriptional regulation, cell cycle progression and developmental events. Histone deacetylases act via the formation of large multiprotein complexes. This chain is Type-2 histone deacetylase 2 (hdaC), found in Dictyostelium discoideum (Social amoeba).